The sequence spans 131 residues: Glycine cleavage system H protein (131 aa).

One can recognise a Lipoyl-binding domain in the interval 24 to 106 (RVTVGISDHA…YGDGWMYVVE (83 aa)). N6-lipoyllysine is present on K65.

Belongs to the GcvH family. In terms of assembly, the glycine cleavage system is composed of four proteins: P, T, L and H. The cofactor is (R)-lipoate.

Its function is as follows. The glycine cleavage system catalyzes the degradation of glycine. The H protein shuttles the methylamine group of glycine from the P protein to the T protein. In Stenotrophomonas maltophilia (strain R551-3), this protein is Glycine cleavage system H protein.